Reading from the N-terminus, the 343-residue chain is Phosphate acyltransferase (343 aa).

It belongs to the PlsX family. As to quaternary structure, homodimer. Probably interacts with PlsY.

The protein localises to the cytoplasm. The catalysed reaction is a fatty acyl-[ACP] + phosphate = an acyl phosphate + holo-[ACP]. It functions in the pathway lipid metabolism; phospholipid metabolism. Its function is as follows. Catalyzes the reversible formation of acyl-phosphate (acyl-PO(4)) from acyl-[acyl-carrier-protein] (acyl-ACP). This enzyme utilizes acyl-ACP as fatty acyl donor, but not acyl-CoA. This Haemophilus ducreyi (strain 35000HP / ATCC 700724) protein is Phosphate acyltransferase.